The chain runs to 334 residues: Serine/Arginine-related protein 53 (334 aa).

Positions methionine 1–arginine 13 are enriched in basic and acidic residues. Disordered stretches follow at residues methionine 1–proline 179, aspartate 198–alanine 220, and arginine 246–threonine 290. Residues serine 14 to serine 24 are compositionally biased toward basic residues. Residues proline 44 to tyrosine 62 show a composition bias toward basic and acidic residues. The span at serine 78–serine 118 shows a compositional bias: basic residues. 3 stretches are compositionally biased toward basic and acidic residues: residues arginine 132–aspartate 166, aspartate 198–aspartate 218, and serine 247–glutamate 256. Residues alanine 180–glutamate 236 adopt a coiled-coil conformation. Positions alanine 265–serine 278 are enriched in low complexity.

As to quaternary structure, interacts (via Arg/Ser-rich domain) with LUC7L3, RBM39 and RSF1. Post-translationally, phosphorylated.

It is found in the nucleus. The protein resides in the nucleus speckle. The protein localises to the cytoplasm. In terms of biological role, plays a role in pre-mRNA splicing. Involved in both constitutive and alternative pre-mRNA splicing. May have a role in the recognition of the 3' splice site during the second step of splicing. This is Serine/Arginine-related protein 53 (Rsrc1) from Mus musculus (Mouse).